We begin with the raw amino-acid sequence, 147 residues long: Large ribosomal subunit protein uL15 (147 aa).

Residues 1-46 (MSIRLENLSYTPGARKEKHRKGRGHAAGKGKQAGRGQSGQKKRSTV) are disordered. Basic residues predominate over residues 16-28 (KEKHRKGRGHAAG).

This sequence belongs to the universal ribosomal protein uL15 family. In terms of assembly, part of the 50S ribosomal subunit.

Functionally, binds to the 23S rRNA. The sequence is that of Large ribosomal subunit protein uL15 from Mesomycoplasma hyopneumoniae (strain J / ATCC 25934 / NCTC 10110) (Mycoplasma hyopneumoniae).